Reading from the N-terminus, the 332-residue chain is Glyceraldehyde-3-phosphate dehydrogenase 2 (332 aa).

NAD(+) contacts are provided by residues R11–I12, D32, and R77. D-glyceraldehyde 3-phosphate-binding positions include S148–T150, T179, T208–G209, and R231. C149 acts as the Nucleophile in catalysis. Position 313 (N313) interacts with NAD(+).

Belongs to the glyceraldehyde-3-phosphate dehydrogenase family. As to quaternary structure, homotetramer.

Its subcellular location is the cytoplasm. The catalysed reaction is D-glyceraldehyde 3-phosphate + phosphate + NAD(+) = (2R)-3-phospho-glyceroyl phosphate + NADH + H(+). It functions in the pathway carbohydrate degradation; glycolysis; pyruvate from D-glyceraldehyde 3-phosphate: step 1/5. The protein is Glyceraldehyde-3-phosphate dehydrogenase 2 (Gapdh2) of Drosophila pseudoobscura pseudoobscura (Fruit fly).